A 308-amino-acid polypeptide reads, in one-letter code: Homoserine O-acetyltransferase (308 aa).

The active-site Acyl-thioester intermediate is the Cys-142. Substrate contacts are provided by Lys-163 and Ser-192. The active-site Proton acceptor is His-235. Glu-237 is an active-site residue. Position 249 (Arg-249) interacts with substrate.

The protein belongs to the MetA family.

It localises to the cytoplasm. It catalyses the reaction L-homoserine + acetyl-CoA = O-acetyl-L-homoserine + CoA. It participates in amino-acid biosynthesis; L-methionine biosynthesis via de novo pathway; O-acetyl-L-homoserine from L-homoserine: step 1/1. Functionally, transfers an acetyl group from acetyl-CoA to L-homoserine, forming acetyl-L-homoserine. The polypeptide is Homoserine O-acetyltransferase (Rhizobium rhizogenes (strain K84 / ATCC BAA-868) (Agrobacterium radiobacter)).